We begin with the raw amino-acid sequence, 235 residues long: uncharacterized protein (235 aa).

The segment at 37-235 is disordered; it reads QNAKLNDGDN…GGEDYPWPWN (199 aa). Residues 72–89 are compositionally biased toward acidic residues; it reads GSDDYSDVEDGGAEEGDS. A compositionally biased stretch (low complexity) spans 112 to 124; that stretch reads TSSTSTASTSSGS. A compositionally biased stretch (basic and acidic residues) spans 152–170; it reads RRPELDLSPKIENRSDSSS. Positions 185–202 are enriched in polar residues; the sequence is NKDNPSRGQGNENPSASD.

The protein belongs to the herpesviridae BKRF4 family.

This is an uncharacterized protein from Alcelaphine herpesvirus 1 (strain C500) (AlHV-1).